The sequence spans 897 residues: Leucine--tRNA ligase (897 aa).

The 'HIGH' region motif lies at 49 to 59 (PYPSGKLHMGH). The 'KMSKS' region signature appears at 654–658 (KMSKS). K657 is an ATP binding site.

This sequence belongs to the class-I aminoacyl-tRNA synthetase family.

It localises to the cytoplasm. It carries out the reaction tRNA(Leu) + L-leucine + ATP = L-leucyl-tRNA(Leu) + AMP + diphosphate. The chain is Leucine--tRNA ligase from Methylibium petroleiphilum (strain ATCC BAA-1232 / LMG 22953 / PM1).